Reading from the N-terminus, the 138-residue chain is U1 small nuclear ribonucleoprotein C (138 aa).

A Matrin-type zinc finger spans residues 4 to 36 (YYCDYCDTFLTHDSPSVRKTHNNGRKHKENVRF). Residues 58-138 (QSKPNSQMPP…MGRPPMSLRS (81 aa)) form a disordered region. Over residues 67–109 (PNAPPGLMPPPGMLPPPGGMPPGRMPPQGLPFPPPGPIPPPPG) the composition is skewed to pro residues. Residues 113 to 138 (MRPPHGQMHMGGPRPQMGRPPMSLRS) are compositionally biased toward low complexity.

Belongs to the U1 small nuclear ribonucleoprotein C family. U1 snRNP is composed of the 7 core Sm proteins B/B', D1, D2, D3, E, F and G that assemble in a heptameric protein ring on the Sm site of the small nuclear RNA to form the core snRNP, and at least 3 U1 snRNP-specific proteins U1-70K, U1-A and U1-C. U1-C interacts with U1 snRNA and the 5' splice-site region of the pre-mRNA.

Its subcellular location is the nucleus. Functionally, component of the spliceosomal U1 snRNP, which is essential for recognition of the pre-mRNA 5' splice-site and the subsequent assembly of the spliceosome. U1-C is directly involved in initial 5' splice-site recognition for both constitutive and regulated alternative splicing. The interaction with the 5' splice-site seems to precede base-pairing between the pre-mRNA and the U1 snRNA. Stimulates commitment or early (E) complex formation by stabilizing the base pairing of the 5' end of the U1 snRNA and the 5' splice-site region. The sequence is that of U1 small nuclear ribonucleoprotein C from Nematostella vectensis (Starlet sea anemone).